The chain runs to 602 residues: Potassium voltage-gated channel subfamily A member 5 (602 aa).

Residues 1 to 202 are tetramerization domain; it reads MEISLVPLEN…FYQLGDEAME (202 aa). Over 1–238 the chain is Cytoplasmic; the sequence is MEISLVPLEN…LIFEYPESSG (238 aa). The tract at residues 58–107 is disordered; sequence EDANQGGRPLPPMAQELPQPRRLSAEDEEGEGDPGLGTVEEDQAPQDAGS. Position 81 is a phosphoserine; by CK2 and PKA (serine 81). Lysine 212 is covalently cross-linked (Glycyl lysine isopeptide (Lys-Gly) (interchain with G-Cter in SUMO)). The chain crosses the membrane as a helical span at residues 239 to 260; it reads SARAIAIVSVLVILISIITFCL. Residues 261–314 are Extracellular-facing; it reads ETLPEFRDERELLRHPPVPPQPPAPAPGINGSVSGALSSGPTVAPLLPRTLADP. A helical membrane pass occupies residues 315–336; that stretch reads FFIVETTCVIWFTFELLVRFFA. A lipid anchor (S-palmitoyl cysteine) is attached at cysteine 337. Residues 337–347 lie on the Cytoplasmic side of the membrane; that stretch reads CPSKAEFSRNI. The chain crosses the membrane as a helical span at residues 348-368; it reads MNIIDVVAIFPYFITLGTELA. The Extracellular portion of the chain corresponds to 369–384; that stretch reads EQQPGGGGQNGQQAMS. Residues 385 to 405 traverse the membrane as a helical; Voltage-sensor segment; the sequence is LAILRVIRLVRVFRIFKLSRH. The Cytoplasmic portion of the chain corresponds to 406–420; it reads SKGLQILGKTLQASM. Residues 407 to 420 form an S4-S5 linker region; that stretch reads KGLQILGKTLQASM. A helical transmembrane segment spans residues 421-442; the sequence is RELGLLIFFLFIGVILFSSAVY. The Extracellular segment spans residues 443–456; it reads FAEADNHGSHFSSI. The helical intramembrane region spans 457–468; that stretch reads PDAFWWAVVTMT. The Selectivity filter signature appears at 469–474; the sequence is TVGYGD. Residues 469–476 lie within the membrane without spanning it; that stretch reads TVGYGDMR. At 477–483 the chain is on the extracellular side; it reads PITVGGK. The chain crosses the membrane as a helical span at residues 484-512; it reads IVGSLCAIAGVLTIALPVPVIVSNFNYFY. Residues 513–602 are Cytoplasmic-facing; the sequence is HRETDHEEQA…CLDTSRETDL (90 aa). The segment covering 523-536 has biased composition (basic and acidic residues); sequence ALKEEQGNQRRESG. Residues 523-543 form a disordered region; the sequence is ALKEEQGNQRRESGLDTGGQR. Lysine 525 participates in a covalent cross-link: Glycyl lysine isopeptide (Lys-Gly) (interchain with G-Cter in SUMO). Serine 535, serine 546, and serine 569 each carry phosphoserine; by PKA. A PDZ-binding motif is present at residues 600–602; the sequence is TDL.

The protein belongs to the potassium channel family. A (Shaker) (TC 1.A.1.2) subfamily. Kv1.5/KCNA5 sub-subfamily. As to quaternary structure, homotetramer and heterotetramer of potassium channel proteins. Interacts with DLG1, which enhances channel currents. Forms a ternary complex with DLG1 and CAV3. Interacts with KCNAB1. Interacts with UBE2I. Interacts with XIRP2; the interaction is required for normal action potential configuration in the heart. Post-translationally, glycosylated. Sumoylated on Lys-212, and Lys-525, preferentially with SUMO3. Sumoylation regulates the voltage sensitivity of the channel. In terms of tissue distribution, expressed equally in atrium, ventricle, aorta and skeletal muscle. Weaker expression in brain.

The protein localises to the cell membrane. The catalysed reaction is K(+)(in) = K(+)(out). In terms of biological role, voltage-gated potassium channel that mediates transmembrane potassium transport in excitable membranes. Forms tetrameric potassium-selective channels through which potassium ions pass in accordance with their electrochemical gradient. The channel alternates between opened and closed conformations in response to the voltage difference across the membrane. Can form functional homotetrameric channels and heterotetrameric channels that contain variable proportions of KCNA1, KCNA2, KCNA4, KCNA5, and possibly other family members as well; channel properties depend on the type of alpha subunits that are part of the channel. Channel properties are modulated by cytoplasmic beta subunits that regulate the subcellular location of the alpha subunits and promote rapid inactivation. Homotetrameric channels display rapid activation and slow inactivation. Required for normal electrical conduction including formation of the infranodal ventricular conduction system and normal action potential configuration, as a result of its interaction with XIRP2. May play a role in regulating the secretion of insulin in normal pancreatic islets. The protein is Potassium voltage-gated channel subfamily A member 5 (Kcna5) of Rattus norvegicus (Rat).